A 264-amino-acid polypeptide reads, in one-letter code: Iodotyrosine deiodinase (264 aa).

FMN-binding positions include 75-79 and 103-104; these read RRTVR and SG. 3-iodo-L-tyrosine contacts are provided by Ala-105, Glu-132, Tyr-136, and Lys-157. Residues 212–214 and Arg-254 contribute to the FMN site; that span reads TST.

This sequence belongs to the nitroreductase family. FMN is required as a cofactor.

The enzyme catalyses 2 iodide + L-tyrosine + 2 NADP(+) = 3,5-diiodo-L-tyrosine + 2 NADPH + H(+). It carries out the reaction iodide + L-tyrosine + NADP(+) = 3-iodo-L-tyrosine + NADPH. It catalyses the reaction 3-iodo-L-tyrosine + iodide + NADP(+) = 3,5-diiodo-L-tyrosine + NADPH + H(+). The catalysed reaction is L-tyrosine + chloride + NADP(+) = 3-chloro-L-tyrosine + NADPH. The enzyme catalyses bromide + L-tyrosine + NADP(+) = 3-bromo-L-tyrosine + NADPH. Catalyzes the dehalogenation of halotyrosines such as 3,5-diiodo-L-tyrosine. Likely to also catalyze the dehalogenation of other halotyrosines such as 3-bromo-L-tyrosine, 3-chloro-L-tyrosine and 3-iodo-L-tyrosine. The protein is Iodotyrosine deiodinase of Nematostella vectensis (Starlet sea anemone).